The primary structure comprises 156 residues: Male-specific protein scotti (156 aa).

The tract at residues 26-48 is disordered; the sequence is TADAGDDADTLEDGQQQQQQQHQ. N-linked (GlcNAc...) asparagine glycosylation is present at N137.

This sequence belongs to the male-specific scotti family.

Post-meiotically transcribed gene that has a role in late spermiogenesis; required for actin cone progression during spermatid individualization. The chain is Male-specific protein scotti from Drosophila erecta (Fruit fly).